The following is a 594-amino-acid chain: Cryptochrome-2 (594 aa).

The Photolyase/cryptochrome alpha/beta domain occupies 21-150; that stretch reads ASSVHWFRKG…EVVTENSHTL (130 aa). Residue K29 forms a Glycyl lysine isopeptide (Lys-Gly) (interchain with G-Cter in ubiquitin) linkage. S89 bears the Phosphoserine mark. Glycyl lysine isopeptide (Lys-Gly) (interchain with G-Cter in ubiquitin) cross-links involve residues K125 and K241. S265 is subject to Phosphoserine; by MAPK. Residue S270 coordinates FAD. The residue at position 298 (S298) is a Phosphoserine. Residue Q307 participates in FAD binding. K347 is covalently cross-linked (Glycyl lysine isopeptide (Lys-Gly) (interchain with G-Cter in ubiquitin)). FAD is bound by residues H373 and 405–407; that span reads DAD. Positions 389-488 are required for inhibition of CLOCK-BMAL1-mediated transcription; it reads WVSWESGVRV…IIGVDYPRPI (100 aa). Residues K474 and K503 each participate in a glycyl lysine isopeptide (Lys-Gly) (interchain with G-Cter in ubiquitin) cross-link. Residues 532–594 are disordered; it reads VAEPGSSQAG…PAQEPPSKDS (63 aa). The span at 536 to 547 shows a compositional bias: polar residues; sequence GSSQAGSISNTG. A Phosphoserine; by GSK3-beta modification is found at S553. Residue S557 is modified to Phosphoserine; by DYRK1A and MAPK.

It belongs to the DNA photolyase class-1 family. As to quaternary structure, component of the circadian core oscillator, which includes the CRY proteins, CLOCK or NPAS2, BMAL1 or BMAL2, CSNK1D and/or CSNK1E, TIMELESS, and the PER proteins. Interacts with TIMELESS. Interacts directly with PER1, PER2 and PER3; interaction with PER2 inhibits its ubiquitination and vice versa. Interacts with CLOCK-BMAL1. Interacts with CLOCK. Interacts with BMAL1. Interacts with NFIL3. Interacts with FBXL3 and FBXL21. FBXL3, PER2 and the cofactor FAD compete for overlapping binding sites. FBXL3 cannot bind CRY2 that interacts already with PER2 or that contains bound FAD. Interacts with PPP5C (via TPR repeats); the interaction down-regulates the PPP5C phosphatase activity on CSNK1E. Interacts with nuclear receptors AR and NR3C1/GR; the interaction is ligand dependent. Interacts with PRKDC and CIART. Interacts with DDB1, USP7 and TARDBP. Interacts with HNF4A and PPARA. Interacts with PPARD (via domain NR LBD) and NR1I2 (via domain NR LBD) in a ligand-dependent manner. Interacts with PPARG, NR1I3 and VDR in a ligand-dependent manner. The cofactor is FAD. (6R)-5,10-methylene-5,6,7,8-tetrahydrofolate is required as a cofactor. In terms of processing, phosphorylation on Ser-265 by MAPK is important for the inhibition of CLOCK-BMAL1-mediated transcriptional activity. Phosphorylation by CSKNe requires interaction with PER1 or PER2. Phosphorylated in a circadian manner at Ser-553 and Ser-557 in the suprachiasmatic nucleus (SCN) and liver. Phosphorylation at Ser-557 by DYRK1A promotes subsequent phosphorylation at Ser-553 by GSK3-beta: the two-step phosphorylation at the neighboring Ser residues leads to its proteasomal degradation. Ubiquitinated by the SCF(FBXL3) and SCF(FBXL21) complexes, regulating the balance between degradation and stabilization. The SCF(FBXL3) complex is mainly nuclear and mediates ubiquitination and subsequent degradation of CRY2. In contrast, cytoplasmic SCF(FBXL21) complex-mediated ubiquitination leads to stabilize CRY2 and counteract the activity of the SCF(FBXL3) complex. The SCF(FBXL3) and SCF(FBXL21) complexes probably mediate ubiquitination at different Lys residues. The SCF(FBXL3) complex recognizes and binds CRY2 phosphorylated at Ser-553 and Ser-557. Ubiquitination may be inhibited by PER2. Deubiquitinated by USP7. Expressed in all tissues examined including heart, cerebellum, cerebral cortex, lung, liver, muscle, kidney and ovary. Highest levels in heart, liver and ovary. Highly expressed in the suprachiasmatic nucleus (SCN).

It is found in the cytoplasm. The protein resides in the nucleus. Transcriptional repressor which forms a core component of the circadian clock. The circadian clock, an internal time-keeping system, regulates various physiological processes through the generation of approximately 24 hour circadian rhythms in gene expression, which are translated into rhythms in metabolism and behavior. It is derived from the Latin roots 'circa' (about) and 'diem' (day) and acts as an important regulator of a wide array of physiological functions including metabolism, sleep, body temperature, blood pressure, endocrine, immune, cardiovascular, and renal function. Consists of two major components: the central clock, residing in the suprachiasmatic nucleus (SCN) of the brain, and the peripheral clocks that are present in nearly every tissue and organ system. Both the central and peripheral clocks can be reset by environmental cues, also known as Zeitgebers (German for 'timegivers'). The predominant Zeitgeber for the central clock is light, which is sensed by retina and signals directly to the SCN. The central clock entrains the peripheral clocks through neuronal and hormonal signals, body temperature and feeding-related cues, aligning all clocks with the external light/dark cycle. Circadian rhythms allow an organism to achieve temporal homeostasis with its environment at the molecular level by regulating gene expression to create a peak of protein expression once every 24 hours to control when a particular physiological process is most active with respect to the solar day. Transcription and translation of core clock components (CLOCK, NPAS2, BMAL1, BMAL2, PER1, PER2, PER3, CRY1 and CRY2) plays a critical role in rhythm generation, whereas delays imposed by post-translational modifications (PTMs) are important for determining the period (tau) of the rhythms (tau refers to the period of a rhythm and is the length, in time, of one complete cycle). A diurnal rhythm is synchronized with the day/night cycle, while the ultradian and infradian rhythms have a period shorter and longer than 24 hours, respectively. Disruptions in the circadian rhythms contribute to the pathology of cardiovascular diseases, cancer, metabolic syndromes and aging. A transcription/translation feedback loop (TTFL) forms the core of the molecular circadian clock mechanism. Transcription factors, CLOCK or NPAS2 and BMAL1 or BMAL2, form the positive limb of the feedback loop, act in the form of a heterodimer and activate the transcription of core clock genes and clock-controlled genes (involved in key metabolic processes), harboring E-box elements (5'-CACGTG-3') within their promoters. The core clock genes: PER1/2/3 and CRY1/2 which are transcriptional repressors form the negative limb of the feedback loop and interact with the CLOCK|NPAS2-BMAL1|BMAL2 heterodimer inhibiting its activity and thereby negatively regulating their own expression. This heterodimer also activates nuclear receptors NR1D1/2 and RORA/B/G, which form a second feedback loop and which activate and repress BMAL1 transcription, respectively. CRY1 and CRY2 have redundant functions but also differential and selective contributions at least in defining the pace of the SCN circadian clock and its circadian transcriptional outputs. Less potent transcriptional repressor in cerebellum and liver than CRY1, though less effective in lengthening the period of the SCN oscillator. Seems to play a critical role in tuning SCN circadian period by opposing the action of CRY1. With CRY1, dispensable for circadian rhythm generation but necessary for the development of intercellular networks for rhythm synchrony. May mediate circadian regulation of cAMP signaling and gluconeogenesis by blocking glucagon-mediated increases in intracellular cAMP concentrations and in CREB1 phosphorylation. Besides its role in the maintenance of the circadian clock, is also involved in the regulation of other processes. Plays a key role in glucose and lipid metabolism modulation, in part, through the transcriptional regulation of genes involved in these pathways, such as LEP or ACSL4. Represses glucocorticoid receptor NR3C1/GR-induced transcriptional activity by binding to glucocorticoid response elements (GREs). Represses the CLOCK-BMAL1 induced transcription of BHLHE40/DEC1 and NAMPT. Represses PPARD and its target genes in the skeletal muscle and limits exercise capacity. Represses the transcriptional activity of NR1I2. In Rattus norvegicus (Rat), this protein is Cryptochrome-2 (Cry2).